We begin with the raw amino-acid sequence, 1081 residues long: Inversin (1081 aa).

16 ANK repeats span residues 13-42 (SLAS…ALKD), 47-76 (FGRT…DVNK), 80-110 (SQRT…WMQK), 113-144 (EEMT…EVDT), 148-177 (NKQT…NIGI), 181-213 (EGKI…TESL), 220-250 (EGRT…NITS), 254-283 (LFRT…SGTI), 288-317 (QGAT…VKDD), 321-350 (EGRT…DIDI), 356-385 (YGGT…QVDA), 389-418 (MKHT…RVDL), 422-451 (DGHS…NPNV), 455-484 (AGRT…DPNI), 488-517 (EGRT…FPNQ), and 523-553 (ERYT…SIAA). Residue Asn75 is modified to 3-hydroxyasparagine. A D-box 1 motif is present at residues 490-498 (RTALHWSCN). Positions 555–584 (QDIAAFKIQAVYKGYKVRKAFRDRKNLLMK) constitute an IQ 1 domain. The span at 589–610 (RKDAAAKKREEENKRREAEQQK) shows a compositional bias: basic and acidic residues. A disordered region spans residues 589 to 889 (RKDAAAKKRE…PAPGPLSGQS (301 aa)). Positions 638 to 649 (RAPSKQPPSSEA) are enriched in polar residues. Composition is skewed to basic and acidic residues over residues 688 to 698 (KPNESPREQCK), 724 to 740 (EKSR…DKGK), and 772 to 785 (DGHR…DTAS). Polar residues predominate over residues 863–872 (SGTSTLSEDA). Residues 910–918 (RKELFRKKN) carry the D-box 2 motif. One can recognise an IQ 2 domain in the interval 917–946 (KNKAAAVIQRAWRSYQLRKHLSHLLHMKEL). The ANK 17 repeat unit spans residues 1022 to 1050 (RTHSVLHLNSVSNLQCIHLLENSGRSKNF). The segment covering 1051–1061 (SYNLQSATPPK) has biased composition (polar residues). A disordered region spans residues 1051 to 1081 (SYNLQSATPPKTKTKLRPSLEEECVRGSWNS).

As to quaternary structure, binds calmodulin via its IQ domains. Interacts with APC2. Interacts with alpha-, beta-, and gamma-catenin. Interacts with N-cadherin (CDH2). Interacts with NPHP1. Interacts with DVL1, PRICKLE (PRICKLE1 or PRICKLE2) and Strabismus (VANGL1 or VANGL2). Component of a complex containing at least ANKS6, INVS, NEK8 and NPHP3. ANKS6 may organize complex assembly by linking INVS and NPHP3 to NEK8 and INVS may target the complex to the proximal ciliary axoneme. Interacts with IQCB1; the interaction likely requires additional interactors. Interacts with microtubules. May be ubiquitinated via its interaction with APC2. Post-translationally, hydroxylated at Asn-75, most probably by HIF1AN.

It is found in the cytoplasm. Its subcellular location is the cytoskeleton. It localises to the membrane. The protein localises to the spindle. The protein resides in the nucleus. Required for normal renal development and establishment of left-right axis. Probably acts as a molecular switch between different Wnt signaling pathways. Inhibits the canonical Wnt pathway by targeting cytoplasmic disheveled (DVL1) for degradation by the ubiquitin-proteasome. This suggests that it is required in renal development to oppose the repression of terminal differentiation of tubular epithelial cells by Wnt signaling. Involved in the organization of apical junctions in kidney cells together with NPHP1, NPHP4 and RPGRIP1L/NPHP8. Does not seem to be strictly required for ciliogenesis. This chain is Inversin (INVS), found in Canis lupus familiaris (Dog).